A 197-amino-acid chain; its full sequence is Guanylate kinase (197 aa).

Residues 7 to 185 (GLIIILSSPS…TLKKIHEIIV (179 aa)) form the Guanylate kinase-like domain. 14–21 (SPSGTGKS) is an ATP binding site.

This sequence belongs to the guanylate kinase family.

Its subcellular location is the cytoplasm. The catalysed reaction is GMP + ATP = GDP + ADP. Functionally, essential for recycling GMP and indirectly, cGMP. The polypeptide is Guanylate kinase (Rickettsia typhi (strain ATCC VR-144 / Wilmington)).